The sequence spans 417 residues: Serine hydroxymethyltransferase (417 aa).

(6S)-5,6,7,8-tetrahydrofolate is bound by residues L121 and 125-127 (GHL). An N6-(pyridoxal phosphate)lysine modification is found at K229. Position 355–357 (355–357 (SPF)) interacts with (6S)-5,6,7,8-tetrahydrofolate.

It belongs to the SHMT family. As to quaternary structure, homodimer. It depends on pyridoxal 5'-phosphate as a cofactor.

It localises to the cytoplasm. It carries out the reaction (6R)-5,10-methylene-5,6,7,8-tetrahydrofolate + glycine + H2O = (6S)-5,6,7,8-tetrahydrofolate + L-serine. It functions in the pathway one-carbon metabolism; tetrahydrofolate interconversion. Its pathway is amino-acid biosynthesis; glycine biosynthesis; glycine from L-serine: step 1/1. Catalyzes the reversible interconversion of serine and glycine with tetrahydrofolate (THF) serving as the one-carbon carrier. This reaction serves as the major source of one-carbon groups required for the biosynthesis of purines, thymidylate, methionine, and other important biomolecules. Also exhibits THF-independent aldolase activity toward beta-hydroxyamino acids, producing glycine and aldehydes, via a retro-aldol mechanism. The polypeptide is Serine hydroxymethyltransferase (Stenotrophomonas maltophilia (strain K279a)).